Consider the following 500-residue polypeptide: NAD(P)H-quinone oxidoreductase chain 4, chloroplastic (500 aa).

Helical transmembrane passes span 4-24 (FPWL…MLFL), 35-55 (YTIS…CYNF), 87-107 (IGTI…AFPV), 134-154 (LLLF…LLSM), 167-187 (FILY…GISL), 211-231 (ILFY…IPLH), 242-262 (HYST…YGLV), 272-292 (AHSM…IYAA), 305-325 (IAYS…SITD), 330-350 (GAIL…FLAG), 386-406 (LALP…GIIT), 416-436 (IFII…LLSM), and 462-482 (LFLS…PDFV).

It belongs to the complex I subunit 4 family.

Its subcellular location is the plastid. It is found in the chloroplast thylakoid membrane. The enzyme catalyses a plastoquinone + NADH + (n+1) H(+)(in) = a plastoquinol + NAD(+) + n H(+)(out). The catalysed reaction is a plastoquinone + NADPH + (n+1) H(+)(in) = a plastoquinol + NADP(+) + n H(+)(out). In Crucihimalaya wallichii (Rock-cress), this protein is NAD(P)H-quinone oxidoreductase chain 4, chloroplastic.